The sequence spans 213 residues: Small ribosomal subunit protein eS1 (213 aa).

Residues 189–213 are disordered; the sequence is ARPEEVAAEEETAVDVDEEDVDVEA. Acidic residues predominate over residues 194–213; sequence VAAEEETAVDVDEEDVDVEA.

This sequence belongs to the eukaryotic ribosomal protein eS1 family.

This is Small ribosomal subunit protein eS1 from Haloarcula marismortui (strain ATCC 43049 / DSM 3752 / JCM 8966 / VKM B-1809) (Halobacterium marismortui).